The chain runs to 149 residues: UPF0178 protein VV1_1847 (149 aa).

Belongs to the UPF0178 family.

The sequence is that of UPF0178 protein VV1_1847 from Vibrio vulnificus (strain CMCP6).